Reading from the N-terminus, the 98-residue chain is ESAT-6-like protein EsxW (98 aa).

Belongs to the WXG100 family. CFP-10 subfamily. In terms of assembly, forms a tight 1:1 complex with EsxV. The complex is destabilized at low pH. Unfolding of the proteins is required for dissociation of the complex and membrane binding.

It localises to the secreted. This is ESAT-6-like protein EsxW from Mycobacterium tuberculosis (strain ATCC 25618 / H37Rv).